Consider the following 88-residue polypeptide: PTS system cellobiose-specific EIIB component (88 aa).

Residues 3 to 88 enclose the PTS EIIB type-3 domain; it reads KKRIYLFCSA…IDTLLYGKVD (86 aa). Catalysis depends on C10, which acts as the Phosphocysteine intermediate. Residue C10 is modified to Phosphocysteine; by EIIA.

The protein resides in the cytoplasm. The catalysed reaction is D-cellobiose(out) + N(pros)-phospho-L-histidyl-[protein] = 6-phospho-beta-D-glucosyl-(1-&gt;4)-D-glucose(in) + L-histidyl-[protein]. Its function is as follows. The phosphoenolpyruvate-dependent sugar phosphotransferase system (sugar PTS), a major carbohydrate active transport system, catalyzes the phosphorylation of incoming sugar substrates concomitantly with their translocation across the cell membrane. The enzyme II CelABD PTS system is involved in cellobiose transport. The sequence is that of PTS system cellobiose-specific EIIB component from Aeromonas hydrophila.